The primary structure comprises 217 residues: Adenylate kinase (217 aa).

10–15 (GAGKGT) is an ATP binding site. The interval 30-59 (STGDMFRAAMKEGTPLGLQAKQYMDRGDLV) is NMP. Residues Thr31, Arg36, 57–59 (DLV), 85–88 (GFPR), and Gln92 contribute to the AMP site. Residues 126–163 (GRRICRNCGATYHLIFHPPAKPGVCDKCGGELYQRADD) are LID. Position 127 (Arg127) interacts with ATP. The Zn(2+) site is built by Cys130 and Cys133. Position 136 to 137 (136 to 137 (TY)) interacts with ATP. Residues Cys150 and Cys153 each coordinate Zn(2+). Residues Arg160 and Arg171 each coordinate AMP. Gln199 lines the ATP pocket.

This sequence belongs to the adenylate kinase family. In terms of assembly, monomer.

Its subcellular location is the cytoplasm. It catalyses the reaction AMP + ATP = 2 ADP. Its pathway is purine metabolism; AMP biosynthesis via salvage pathway; AMP from ADP: step 1/1. Its function is as follows. Catalyzes the reversible transfer of the terminal phosphate group between ATP and AMP. Plays an important role in cellular energy homeostasis and in adenine nucleotide metabolism. This Geobacillus stearothermophilus (Bacillus stearothermophilus) protein is Adenylate kinase.